The sequence spans 345 residues: RDS/peripherin-like protein xRDS35 (345 aa).

At 1–24 the chain is on the cytoplasmic side; the sequence is MVLFKAKFSFQRRVKLAQTLWLLS. A helical transmembrane segment spans residues 25-43; it reads WLSVLVGCLTFGMGIFLKV. Topologically, residues 44 to 61 are lumenal; the sequence is QLWIHNEVMENTSAHAVP. N-linked (GlcNAc...) asparagine glycosylation occurs at Asn54. Residues 62 to 80 form a helical membrane-spanning segment; that stretch reads NTVITAGLVGILLGIYAGK. At 81–99 the chain is on the cytoplasmic side; that stretch reads VSQASMDVTKYQRWKSFMM. The helical transmembrane segment at 100-123 threads the bilayer; that stretch reads PFFFLAILSCLVCLAALVLSVALR. Over 124–264 the chain is Lumenal; sequence GTLEESLKIG…LSYYTGIMAT (141 aa). N-linked (GlcNAc...) asparagine glycosylation occurs at Asn229. Residues 265 to 290 traverse the membrane as a helical segment; the sequence is NGAAVTLSFLLQASVLVSLRYLHTSM. Residues 291–345 lie on the Cytoplasmic side of the membrane; that stretch reads DKISGPDDMEADTEGFILEKGVTETMNTTLEKMKGLFMSNQVETAEGGGEAAAAS.

The protein belongs to the PRPH2/ROM1 family. As to quaternary structure, homodimer; disulfide-linked. As to expression, rod specific.

It localises to the membrane. This chain is RDS/peripherin-like protein xRDS35 (rds35), found in Xenopus laevis (African clawed frog).